The sequence spans 136 residues: Small ribosomal subunit protein eS17A (136 aa).

The protein belongs to the eukaryotic ribosomal protein eS17 family. As to quaternary structure, component of the small ribosomal subunit (SSU). Mature yeast ribosomes consist of a small (40S) and a large (60S) subunit. The 40S small subunit contains 1 molecule of ribosomal RNA (18S rRNA) and 33 different proteins (encoded by 57 genes). The large 60S subunit contains 3 rRNA molecules (25S, 5.8S and 5S rRNA) and 46 different proteins (encoded by 81 genes).

It is found in the cytoplasm. In terms of biological role, component of the ribosome, a large ribonucleoprotein complex responsible for the synthesis of proteins in the cell. The small ribosomal subunit (SSU) binds messenger RNAs (mRNAs) and translates the encoded message by selecting cognate aminoacyl-transfer RNA (tRNA) molecules. The large subunit (LSU) contains the ribosomal catalytic site termed the peptidyl transferase center (PTC), which catalyzes the formation of peptide bonds, thereby polymerizing the amino acids delivered by tRNAs into a polypeptide chain. The nascent polypeptides leave the ribosome through a tunnel in the LSU and interact with protein factors that function in enzymatic processing, targeting, and the membrane insertion of nascent chains at the exit of the ribosomal tunnel. The protein is Small ribosomal subunit protein eS17A of Saccharomyces cerevisiae (strain ATCC 204508 / S288c) (Baker's yeast).